The chain runs to 244 residues: Cytochrome c1 (244 aa).

The first 19 residues, 1-19 (MRKLILATFLLLAPTALLA), serve as a signal peptide directing secretion. Heme c-binding residues include C50, C53, and H54. Residues 220 to 240 (YVLLFLGFLFILAYLLKKEYW) form a helical membrane-spanning segment.

As to quaternary structure, the main subunits of complex b-c1 are: cytochrome b, cytochrome c1 and the Rieske protein. Binds 1 heme c group covalently per subunit.

The protein resides in the cell membrane. Component of the ubiquinol-cytochrome c reductase complex (complex III or cytochrome b-c1 complex), which is a respiratory chain that generates an electrochemical potential coupled to ATP synthesis. c1 functions as an electron donor to cytochrome c. This Allochromatium vinosum (strain ATCC 17899 / DSM 180 / NBRC 103801 / NCIMB 10441 / D) (Chromatium vinosum) protein is Cytochrome c1 (petC).